Consider the following 364-residue polypeptide: Spermidine/putrescine import ATP-binding protein PotA (364 aa).

Residues 5-235 form the ABC transporter domain; sequence LSFKGVTKGF…PVNRFVADFI (231 aa). 37–44 is a binding site for ATP; sequence GPSGCGKT.

This sequence belongs to the ABC transporter superfamily. Spermidine/putrescine importer (TC 3.A.1.11.1) family. The complex is composed of two ATP-binding proteins (PotA), two transmembrane proteins (PotB and PotC) and a solute-binding protein (PotD).

It is found in the cell membrane. It carries out the reaction ATP + H2O + polyamine-[polyamine-binding protein]Side 1 = ADP + phosphate + polyamineSide 2 + [polyamine-binding protein]Side 1.. Functionally, part of the ABC transporter complex PotABCD involved in spermidine/putrescine import. Responsible for energy coupling to the transport system. The polypeptide is Spermidine/putrescine import ATP-binding protein PotA (Staphylococcus haemolyticus (strain JCSC1435)).